The chain runs to 497 residues: Histidine--tRNA ligase (497 aa).

This sequence belongs to the class-II aminoacyl-tRNA synthetase family. Homodimer.

It is found in the cytoplasm. The catalysed reaction is tRNA(His) + L-histidine + ATP = L-histidyl-tRNA(His) + AMP + diphosphate + H(+). In Dinoroseobacter shibae (strain DSM 16493 / NCIMB 14021 / DFL 12), this protein is Histidine--tRNA ligase.